A 340-amino-acid chain; its full sequence is HTH-type transcriptional repressor PurR (340 aa).

The 55-residue stretch at 2–56 (ATIKDVAKLVGVSTTTVSHVINKTRFVAEDTTKAVWEAIASLNYSPSAVARSLKV) folds into the HTH lacI-type domain. The segment at residues 4 to 23 (IKDVAKLVGVSTTTVSHVIN) is a DNA-binding region (H-T-H motif). The DNA-binding element occupies 48–56 (SAVARSLKV). 5 residues coordinate hypoxanthine: Tyr-73, Lys-188, Thr-190, Phe-219, and Asp-273.

In terms of assembly, homodimer.

Its pathway is purine metabolism; purine nucleotide biosynthesis [regulation]. Functionally, is the main repressor of the genes involved in the de novo synthesis of purine nucleotides, regulating purB, purC, purEK, purF, purHD, purL, purMN and guaBA expression. PurR is allosterically activated to bind its cognate DNA by binding the purine corepressors, hypoxanthine or guanine, thereby effecting transcription repression. This chain is HTH-type transcriptional repressor PurR, found in Glaesserella parasuis serovar 5 (strain SH0165) (Haemophilus parasuis).